The primary structure comprises 75 residues: UPF0352 protein VSAL_I1058 (75 aa).

The protein belongs to the UPF0352 family.

In Aliivibrio salmonicida (strain LFI1238) (Vibrio salmonicida (strain LFI1238)), this protein is UPF0352 protein VSAL_I1058.